A 345-amino-acid polypeptide reads, in one-letter code: Ribosomal RNA small subunit methyltransferase H (345 aa).

S-adenosyl-L-methionine-binding positions include 47–49 (GGY), aspartate 65, phenylalanine 92, aspartate 113, and glutamine 120. Positions 296 to 345 (EPGPDEVAGNPRARSAKLRAAERTNAPAHPGGDLMGLLPAPPPQRHGRRR) are disordered.

The protein belongs to the methyltransferase superfamily. RsmH family.

It is found in the cytoplasm. It catalyses the reaction cytidine(1402) in 16S rRNA + S-adenosyl-L-methionine = N(4)-methylcytidine(1402) in 16S rRNA + S-adenosyl-L-homocysteine + H(+). Specifically methylates the N4 position of cytidine in position 1402 (C1402) of 16S rRNA. The sequence is that of Ribosomal RNA small subunit methyltransferase H from Xanthobacter autotrophicus (strain ATCC BAA-1158 / Py2).